The following is a 244-amino-acid chain: Large ribosomal subunit protein uL30B (244 aa).

Residues 1–11 (MSTEKILTPES) show a composition bias toward polar residues. Residues 1–21 (MSTEKILTPESQLKKTKAQQK) form a disordered region.

Belongs to the universal ribosomal protein uL30 family. As to quaternary structure, component of the large ribosomal subunit (LSU). Mature yeast ribosomes consist of a small (40S) and a large (60S) subunit. The 40S small subunit contains 1 molecule of ribosomal RNA (18S rRNA) and 33 different proteins (encoded by 57 genes). The large 60S subunit contains 3 rRNA molecules (25S, 5.8S and 5S rRNA) and 46 different proteins (encoded by 81 genes).

The protein resides in the cytoplasm. Functionally, component of the ribosome, a large ribonucleoprotein complex responsible for the synthesis of proteins in the cell. The small ribosomal subunit (SSU) binds messenger RNAs (mRNAs) and translates the encoded message by selecting cognate aminoacyl-transfer RNA (tRNA) molecules. The large subunit (LSU) contains the ribosomal catalytic site termed the peptidyl transferase center (PTC), which catalyzes the formation of peptide bonds, thereby polymerizing the amino acids delivered by tRNAs into a polypeptide chain. The nascent polypeptides leave the ribosome through a tunnel in the LSU and interact with protein factors that function in enzymatic processing, targeting, and the membrane insertion of nascent chains at the exit of the ribosomal tunnel. The protein is Large ribosomal subunit protein uL30B of Saccharomyces cerevisiae (strain ATCC 204508 / S288c) (Baker's yeast).